We begin with the raw amino-acid sequence, 88 residues long: Histone H2A-beta, sperm (88 aa).

It belongs to the histone H2A family. As to quaternary structure, the nucleosome is a histone octamer containing two molecules each of H2A, H2B, H3 and H4 assembled in one H3-H4 heterotetramer and two H2A-H2B heterodimers. The octamer wraps approximately 147 bp of DNA. Monoubiquitination in C-terminus gives a specific tag for epigenetic transcriptional repression.

The protein resides in the nucleus. Its subcellular location is the chromosome. In terms of biological role, core component of nucleosome. Nucleosomes wrap and compact DNA into chromatin, limiting DNA accessibility to the cellular machineries which require DNA as a template. Histones thereby play a central role in transcription regulation, DNA repair, DNA replication and chromosomal stability. DNA accessibility is regulated via a complex set of post-translational modifications of histones, also called histone code, and nucleosome remodeling. The protein is Histone H2A-beta, sperm of Strongylocentrotus purpuratus (Purple sea urchin).